A 3619-amino-acid chain; its full sequence is BEACH domain-containing protein lvsA (3619 aa).

7 disordered regions span residues 1–117, 648–709, 1101–1129, 1367–1390, 1636–1658, 1893–1924, and 1964–1999; these read MFRR…NNNN, KIDD…EKEA, NNNNNNSSNNSNNSNNSNNNNNNNNNNDQ, SPNLTGLQNNNNNNNNSGGSNSKK, IPTPSSSSSSSSTSSTSSRRKSI, SSISSNISSSSSSSTLVNSSNSNNNNNTPTSG, and QQAALKKKNRMSIQSSPFQSKNLGTGGDDSVTNTPN. Over residues 17 to 30 the composition is skewed to pro residues; it reads PQVPHSPGHPPHQP. Low complexity-rich tracts occupy residues 31 to 59, 68 to 87, 97 to 117, 656 to 689, 1101 to 1127, 1375 to 1387, 1640 to 1652, and 1893 to 1923; these read PQQQQQQQQQQQQQQQQQQQQQQQQQQPQ, SVSSPIGSTTSSNSTSSFSS, EESSSINSNNNNNNNKNNNNN, NNNNNNNNNNNNNNNNNNNDNDNNNNNDNNNEEN, NNNNNNSSNNSNNSNNSNNNNNNNNNN, NNNNNNNNSGGSN, SSSSSSSSTSSTS, and SSISSNISSSSSSSTLVNSSNSNNNNNTPTS. The WD 1 repeat unit spans residues 94 to 133; that stretch reads SATEESSSINSNNNNNNNKNNNNNNNSNIIESNINVWTIM. The segment covering 1974 to 1986 has biased composition (polar residues); the sequence is MSIQSSPFQSKNL. Residues 2234 to 2258 adopt a coiled-coil conformation; the sequence is VKILEKLEADRVGLQKTVQSLYKSL. The WD 2 repeat unit spans residues 2294 to 2335; sequence LDSDFMNAFCYPLYKLVISDQHEHVDNSIKLWRLLLSLKTSS. Disordered regions lie at residues 2403 to 2457 and 2596 to 2785; these read KKQH…ITKK and NTSS…SEDE. Over residues 2440 to 2452 the composition is skewed to basic and acidic residues; that stretch reads DRKDQSHQEEKSK. Residues 2596-2662 are compositionally biased toward low complexity; the sequence is NTSSITNNNN…TTTPQQSSSQ (67 aa). Polar residues-rich tracts occupy residues 2663–2687 and 2694–2725; these read IKVSSPELSSNEITPPTSPVQSSSE and KLQSSTVEGQLSRNPSSSELFNDNSSTISEEN. Composition is skewed to low complexity over residues 2726-2735 and 2742-2764; these read SSLTSASTTL and TQTTTTTTTSTPTTQSSVATTTT. The BEACH-type PH domain maps to 2807-2932; the sequence is KDPRLNGIMY…TRDEVYHTLV (126 aa). The disordered stretch occupies residues 2940–2971; that stretch reads TIGGDAQGITGGQTGNDDNDDHHGGGGGRGVR. Positions 2944–2953 are enriched in gly residues; sequence DAQGITGGQT. Residues 2959–2971 show a composition bias toward basic and acidic residues; it reads DDHHGGGGGRGVR. Residues 2972 to 3270 form the BEACH domain; sequence DRFTSIWRKS…QLFDKPHPKR (299 aa). WD repeat units follow at residues 3347–3386, 3389–3428, 3431–3471, 3474–3518, and 3563–3602; these read HHDGPLTCLTATEDGRICVSGGSDSLICVYNLKRFSLAKR, GHTGSITCVSASRPYSIIVSGSDDRTCIIWDLNRLCYVRS, AHEG…NYKT, IAND…LPDN, and SHSTAITSIFLTNDQQKFYTGDITGRVCMWSDNEASQVKQ. A disordered region spans residues 3516–3539; it reads PDNNNSNNNNNNNNNNNNNATQIP. Over residues 3518 to 3534 the composition is skewed to low complexity; it reads NNNSNNNNNNNNNNNNN.

It localises to the contractile vacuole membrane. In terms of biological role, involved in myosin-independent cytokinesis and early steps of phagocytosis. Also involved in contractile vacuole-mediated osmoregulation. The sequence is that of BEACH domain-containing protein lvsA (lvsA) from Dictyostelium discoideum (Social amoeba).